We begin with the raw amino-acid sequence, 341 residues long: L-threonine 3-dehydrogenase (341 aa).

Cysteine 38 serves as a coordination point for Zn(2+). Catalysis depends on charge relay system residues threonine 40 and histidine 43. 6 residues coordinate Zn(2+): histidine 63, glutamate 64, cysteine 93, cysteine 96, cysteine 99, and cysteine 107. NAD(+)-binding positions include isoleucine 175, aspartate 195, arginine 200, 262 to 264 (LGI), and 286 to 287 (IY).

The protein belongs to the zinc-containing alcohol dehydrogenase family. As to quaternary structure, homotetramer. Zn(2+) is required as a cofactor.

The protein resides in the cytoplasm. It carries out the reaction L-threonine + NAD(+) = (2S)-2-amino-3-oxobutanoate + NADH + H(+). Its pathway is amino-acid degradation; L-threonine degradation via oxydo-reductase pathway; glycine from L-threonine: step 1/2. Catalyzes the NAD(+)-dependent oxidation of L-threonine to 2-amino-3-ketobutyrate. The chain is L-threonine 3-dehydrogenase from Escherichia coli O17:K52:H18 (strain UMN026 / ExPEC).